Reading from the N-terminus, the 539-residue chain is Glucans biosynthesis protein D (539 aa).

Positions 1–29 (MNRRNLLKASMALAAYGSVSASGLYAARA) form a signal peptide, tat-type signal.

Belongs to the OpgD/OpgG family. In terms of processing, predicted to be exported by the Tat system. The position of the signal peptide cleavage has not been experimentally proven.

It is found in the periplasm. The protein operates within glycan metabolism; osmoregulated periplasmic glucan (OPG) biosynthesis. In terms of biological role, probably involved in the control of the structural glucose backbone of osmoregulated periplasmic glucans (OPGs). The protein is Glucans biosynthesis protein D of Pseudomonas savastanoi pv. phaseolicola (strain 1448A / Race 6) (Pseudomonas syringae pv. phaseolicola (strain 1448A / Race 6)).